We begin with the raw amino-acid sequence, 371 residues long: Vasopressin V2 receptor (371 aa).

The segment at 1–27 is disordered; the sequence is MILVSTTSAVPGALSSPSSPSNSSQEE. Topologically, residues 1-38 are extracellular; that stretch reads MILVSTTSAVPGALSSPSSPSNSSQEELLDDRDPLLVR. The span at 15-24 shows a compositional bias: low complexity; that stretch reads SSPSSPSNSS. N22 is a glycosylation site (N-linked (GlcNAc...) asparagine). A helical transmembrane segment spans residues 39–63; it reads AELALLSTIFVAVALSNGLVLGALI. Topologically, residues 64–77 are cytoplasmic; that stretch reads RRGRRGRWAPMHVF. The chain crosses the membrane as a helical span at residues 78–98; it reads ISHLCLADLAVALFQVLPQLA. Over 99–113 the chain is Extracellular; it reads WDATDRFHGPDALCR. A helical membrane pass occupies residues 114–135; that stretch reads AVKYLQMVGMYASSYMILAMTL. The Cytoplasmic portion of the chain corresponds to 136–159; sequence DRHRAICRPMLAYRHGGGARWNRP. The chain crosses the membrane as a helical span at residues 160–180; it reads VLVAWAFSLLLSLPQLFIFAQ. Residues 181 to 200 are Extracellular-facing; that stretch reads RDVGNGSGVFDCWARFAEPW. The N-linked (GlcNAc...) asparagine glycan is linked to N185. The chain crosses the membrane as a helical span at residues 201-220; that stretch reads GLRAYVTWIALMVFVAPALG. The Cytoplasmic segment spans residues 221 to 271; sequence IAACQVLIFREIHASLVPGPSERAGRRRRGHRTGSPSEGAHVSAAMAKTVR. The interval 240 to 259 is disordered; sequence PSERAGRRRRGHRTGSPSEG. A helical transmembrane segment spans residues 272-293; that stretch reads MTLVIVIVYVLCWAPFFLVQLW. The Extracellular portion of the chain corresponds to 294 to 308; the sequence is AAWDPEAPLERPPFV. Residues 309–328 traverse the membrane as a helical segment; sequence LLMLLASLNSCTNPWIYASF. Residues 329–371 are Cytoplasmic-facing; it reads SSSVSSELRSLLCCAQRHTTHSLGPQDESCATASSSLMKDTPS. 2 S-palmitoyl cysteine lipidation sites follow: C341 and C342. The disordered stretch occupies residues 349–371; that stretch reads HSLGPQDESCATASSSLMKDTPS. A compositionally biased stretch (polar residues) spans 357 to 371; it reads SCATASSSLMKDTPS.

It belongs to the G-protein coupled receptor 1 family. Vasopressin/oxytocin receptor subfamily. Interacts with ARRDC4. Identified in a complex containing at least ARRDC4, V2R and HGS. Interacts with TMEM147. In terms of tissue distribution, highly expressed in kidney (at protein level) and moderately expressed in liver (at protein level). No or extremely low expression in left ventricule, muscle, bone and brain (at protein level).

It localises to the cell membrane. Receptor for arginine vasopressin. The activity of this receptor is mediated by G proteins which activate adenylate cyclase. Involved in renal water reabsorption. This chain is Vasopressin V2 receptor (Avpr2), found in Mus musculus (Mouse).